Here is a 130-residue protein sequence, read N- to C-terminus: Small ribosomal subunit protein uS8 (130 aa).

This sequence belongs to the universal ribosomal protein uS8 family. As to quaternary structure, part of the 30S ribosomal subunit.

Its function is as follows. One of the primary rRNA binding proteins, it binds directly to 16S rRNA central domain where it helps coordinate assembly of the platform of the 30S subunit. This is Small ribosomal subunit protein uS8 from Pyrobaculum arsenaticum (strain DSM 13514 / JCM 11321 / PZ6).